We begin with the raw amino-acid sequence, 231 residues long: Uracil phosphoribosyltransferase (231 aa).

Lys38–Arg42 is a GTP binding site. 5-phospho-alpha-D-ribose 1-diphosphate is bound by residues Arg87, Arg112, and Asp140–Thr148. Uracil is bound by residues Ile203 and Gly208–Ala210. Asp209 contacts 5-phospho-alpha-D-ribose 1-diphosphate.

It belongs to the UPRTase family. Requires Mg(2+) as cofactor.

The enzyme catalyses UMP + diphosphate = 5-phospho-alpha-D-ribose 1-diphosphate + uracil. The protein operates within pyrimidine metabolism; UMP biosynthesis via salvage pathway; UMP from uracil: step 1/1. Its activity is regulated as follows. Allosterically activated by GTP. Catalyzes the conversion of uracil and 5-phospho-alpha-D-ribose 1-diphosphate (PRPP) to UMP and diphosphate. In Methanococcus maripaludis (strain C5 / ATCC BAA-1333), this protein is Uracil phosphoribosyltransferase.